Here is a 306-residue protein sequence, read N- to C-terminus: D-alanine--D-alanine ligase (306 aa).

The ATP-grasp domain maps to 101–301 (KKILAHAGLP…FPDLVEHLVR (201 aa)). 129–185 (VAELGLPVVVKAPTQGSSIGVYIVEREEDLEARITDAVAYGGTRVLVEKFIAGPELT) contributes to the ATP binding site. Mg(2+)-binding residues include aspartate 256, glutamate 268, and asparagine 270.

Belongs to the D-alanine--D-alanine ligase family. Requires Mg(2+) as cofactor. The cofactor is Mn(2+).

It is found in the cytoplasm. It carries out the reaction 2 D-alanine + ATP = D-alanyl-D-alanine + ADP + phosphate + H(+). It functions in the pathway cell wall biogenesis; peptidoglycan biosynthesis. Its function is as follows. Cell wall formation. The polypeptide is D-alanine--D-alanine ligase (Desulforudis audaxviator (strain MP104C)).